The following is a 201-amino-acid chain: Recombination protein RecR (201 aa).

The segment at 60 to 75 adopts a C4-type zinc-finger fold; sequence CQICGNIDTRDPCTIC. Residues 83-178 enclose the Toprim domain; the sequence is TLLVVVETVA…KITRLAHGVP (96 aa).

The protein belongs to the RecR family.

In terms of biological role, may play a role in DNA repair. It seems to be involved in an RecBC-independent recombinational process of DNA repair. It may act with RecF and RecO. The chain is Recombination protein RecR from Beijerinckia indica subsp. indica (strain ATCC 9039 / DSM 1715 / NCIMB 8712).